The sequence spans 185 residues: Ribosome-recycling factor (185 aa).

Belongs to the RRF family.

It localises to the cytoplasm. Functionally, responsible for the release of ribosomes from messenger RNA at the termination of protein biosynthesis. May increase the efficiency of translation by recycling ribosomes from one round of translation to another. The chain is Ribosome-recycling factor from Hahella chejuensis (strain KCTC 2396).